The primary structure comprises 338 residues: UDP-glucose 4-epimerase (338 aa).

Residues 11–12, 31–36, 58–59, 80–84, Asn99, Ser124, Tyr149, Lys153, and Phe178 contribute to the NAD(+) site; these read YI, DNLCNS, DI, and FAGLK. Ser124 and Tyr149 together coordinate substrate. Tyr149 (proton acceptor) is an active-site residue. Residues Asn179, 199–200, 216–218, Arg231, and 292–295 each bind substrate; these read NL, SVF, and RPGD.

It belongs to the NAD(P)-dependent epimerase/dehydratase family. In terms of assembly, homodimer. It depends on NAD(+) as a cofactor.

It catalyses the reaction UDP-alpha-D-glucose = UDP-alpha-D-galactose. It functions in the pathway carbohydrate metabolism; galactose metabolism. In terms of biological role, involved in the metabolism of galactose. Catalyzes the conversion of UDP-galactose (UDP-Gal) to UDP-glucose (UDP-Glc) through a mechanism involving the transient reduction of NAD. The polypeptide is UDP-glucose 4-epimerase (galE) (Pasteurella multocida (strain Pm70)).